Reading from the N-terminus, the 144-residue chain is Large ribosomal subunit protein uL14 (144 aa).

It belongs to the universal ribosomal protein uL14 family. As to quaternary structure, part of the 50S ribosomal subunit. Forms a cluster with proteins L3 and L24e, part of which may contact the 16S rRNA in 2 intersubunit bridges.

Binds to 23S rRNA. Forms part of two intersubunit bridges in the 70S ribosome. The protein is Large ribosomal subunit protein uL14 of Caldivirga maquilingensis (strain ATCC 700844 / DSM 13496 / JCM 10307 / IC-167).